A 348-amino-acid polypeptide reads, in one-letter code: MAVYFVTGKLGSGKTLVSVGKIQDKIVAGCKIATNLDLRLQNLPQVGRFAKTPRVLRIPDKPSISDLLAIGRGNDSYDENKNGLLVLDECGTWFNTRSWNDKERQPIIDWFLHARKLGWDIIFLVQDLSIVDKQARSALAEHVVYCRRLDRITLPFVGTLYSLVTGSKMPLPKLHVGVVKYGDSQLSPTVERWLYTGKNLYNAYDTKQAFSSNYDSGVYSYLTPYLSHGRYFKPLNLGQKMKLTKIYLKKFSRVLCLAIGFASAFTYSYITQPKPEVKKVVSQTYDFDKFTIDSSQRLNLSYRYVFKDSKGKLINSDDLQKQGYSITYIDLCTVSIKKGNSNEIVKCN.

Over 1–252 (MAVYFVTGKL…LTKIYLKKFS (252 aa)) the chain is Cytoplasmic. 8–15 (GKLGSGKT) contacts ATP. The helical; Signal-anchor for type II membrane protein transmembrane segment at 253–273 (RVLCLAIGFASAFTYSYITQP) threads the bilayer. At 274 to 348 (KPEVKKVVSQ…GNSNEIVKCN (75 aa)) the chain is on the periplasmic side.

Belongs to the inovirus G1P protein family. Interacts with G4P; this interaction results in a complex that spans the inner an outer host membranes.

Its subcellular location is the host membrane. Functionally, isoform G1P plays an essential role in phage assembly. It is required to increase the number of adhesion zones between the inner and outer membranes of the host cell. The extrusion of neo-synthesized phages occurs at these adhesion sites. May be involved with G4P in creating zone through which the phage assembled and extruded. In terms of biological role, isoform G11P is also involved in phage assembly, probably playing a structural role in the formation of the phage assembly site. The sequence is that of Gene 1 protein (I) from Enterobacteria phage fd (Bacteriophage fd).